Here is a 145-residue protein sequence, read N- to C-terminus: Large ribosomal subunit protein uL14m (145 aa).

The N-terminal 30 residues, 1-30 (MAVLTGLFGFFAYVRGAVSQRCFSTSGSLS), are a transit peptide targeting the mitochondrion.

It belongs to the universal ribosomal protein uL14 family. In terms of assembly, component of the mitochondrial ribosome large subunit (39S) which comprises a 16S rRNA and about 50 distinct proteins. Interacts with MALSU1.

It localises to the mitochondrion. In terms of biological role, may form part of 2 intersubunit bridges in the assembled ribosome. Upon binding to MALSU1, intersubunit bridge formation is blocked, preventing ribosome formation and repressing translation. The protein is Large ribosomal subunit protein uL14m (Mrpl14) of Rattus norvegicus (Rat).